Here is a 215-residue protein sequence, read N- to C-terminus: 2-dehydro-3-deoxy-phosphogluconate aldolase (215 aa).

Catalysis depends on Glu-46, which acts as the Proton acceptor. Pyruvate is bound by residues Arg-50, Thr-74, and Lys-134. Residue Lys-134 is the Schiff-base intermediate with substrate of the active site.

This sequence belongs to the KHG/KDPG aldolase family. In terms of assembly, homotrimer.

It catalyses the reaction 2-dehydro-3-deoxy-6-phospho-D-gluconate = D-glyceraldehyde 3-phosphate + pyruvate. Its pathway is carbohydrate acid metabolism; 2-dehydro-3-deoxy-D-gluconate degradation; D-glyceraldehyde 3-phosphate and pyruvate from 2-dehydro-3-deoxy-D-gluconate: step 2/2. Involved in the degradation of glucose via the Entner-Doudoroff pathway. Catalyzes the reversible, stereospecific retro-aldol cleavage of 2-keto-3-deoxy-6-phosphogluconate (KDPG) to pyruvate and D-glyceraldehyde-3-phosphate. Involved in the degradation of 3,6-anhydro-L-galactose (L-AnG), which is the major monomeric sugar of red macroalgae. The cleavage of KDPG to glyceraldehyde 3-phosphate and pyruvate is the sixth step of this pathway. In Pseudoalteromonas atlantica (strain T6c / ATCC BAA-1087), this protein is 2-dehydro-3-deoxy-phosphogluconate aldolase.